Here is a 97-residue protein sequence, read N- to C-terminus: Citrate lyase acyl carrier protein (97 aa).

Ser-14 is subject to O-(phosphoribosyl dephospho-coenzyme A)serine.

This sequence belongs to the CitD family. As to quaternary structure, oligomer with a subunit composition of (alpha,beta,gamma)6.

It is found in the cytoplasm. Its function is as follows. Covalent carrier of the coenzyme of citrate lyase. The polypeptide is Citrate lyase acyl carrier protein (Oenococcus oeni (strain ATCC BAA-331 / PSU-1)).